Here is a 673-residue protein sequence, read N- to C-terminus: Clotting factor G alpha subunit (673 aa).

The N-terminal stretch at 1–19 (MLVLLCCVVLHVGVARICC) is a signal peptide. A GH16 domain is found at 27 to 257 (LVWSDEFTNG…YVRVYQDAST (231 aa)). Residue Glu137 is the Nucleophile of the active site. Glu142 (proton donor) is an active-site residue. N-linked (GlcNAc...) asparagine glycosylation is present at Asn186. Residues 266 to 404 (LDGYYFVQNR…NQLSGQWKLI (139 aa)) enclose the Ricin B-type lectin domain. CBM6 domains follow at residues 411-533 (KLIQ…IKIT) and 549-671 (KLIQ…IRIT).

The protein belongs to the glycosyl hydrolase 16 family. As to quaternary structure, clotting factor G is a heterodimer composed of two non-covalently associated subunits, alpha and beta. In terms of processing, in presence of (1-&gt;3)-beta-glucan, proteolytically cleaved into a 55kDa and a 17kDa forms. As to expression, expressed in hemocytes (at protein level).

In terms of biological role, component of the heterodimer clotting factor G which may play a role in defense mechanisms against fungi. Initiates a (1-&gt;3)-beta-glucan-sensing clotting pathway whereby the alpha subunit binds to glucans containing (1-&gt;3)-beta linkages, which are components of the fungal cell wall, and the beta subunit catalyzes the activation of proclotting enzyme. The protein is Clotting factor G alpha subunit of Tachypleus tridentatus (Japanese horseshoe crab).